Consider the following 272-residue polypeptide: Insertion element IS600 uncharacterized 31 kDa protein (272 aa).

The Integrase catalytic domain occupies 105-268 (APTAPNQVWV…SPAAFREKYH (164 aa)).

In Shigella sonnei, this protein is Insertion element IS600 uncharacterized 31 kDa protein.